Consider the following 801-residue polypeptide: Fibroblast growth factor receptor 3 (801 aa).

The first 20 residues, 1 to 20 (MVVPACVLVFCVAVVAGATS), serve as a signal peptide directing secretion. The Extracellular segment spans residues 21-369 (EPPGPEQRVV…TDEAGSVYAG (349 aa)). One can recognise an Ig-like C2-type 1 domain in the interval 22–124 (PPGPEQRVVR…VLCHFSVRVT (103 aa)). A disulfide bridge connects residues C59 and C107. N96 carries N-linked (GlcNAc...) asparagine glycosylation. The tract at residues 125–146 (DAPSSGDDEDGEDVAEDTGAPY) is disordered. Over residues 130–140 (GDDEDGEDVAE) the composition is skewed to acidic residues. Ig-like C2-type domains are found at residues 145 to 238 (PYWT…YTLD) and 247 to 349 (PILQ…AWLV). A disulfide bond links C170 and C222. N219, N256, N288, N309, and N322 each carry an N-linked (GlcNAc...) asparagine glycan. A disulfide bridge links C269 with C333. The helical transmembrane segment at 370-390 (VLSYGVVFFLFILVVAAVILC) threads the bilayer. Residues 391-801 (RLRSPPKKGL…GPPSNGGPRT (411 aa)) lie on the Cytoplasmic side of the membrane. Phosphoserine is present on residues S438 and S439. One can recognise a Protein kinase domain in the interval 466–756 (LTLGKPLGEG…LTVTSTDEYL (291 aa)). ATP-binding positions include 472 to 480 (LGEGCFGQV) and K502. Residue D611 is the Proton acceptor of the active site. Phosphotyrosine; by autocatalysis is present on residues Y641, Y642, Y719, and Y755. Residues 762–801 (FEQYSPGGQDTPSSSSSGDDSVFTHDLLPPGPPSNGGPRT) form a disordered region. The segment covering 766-782 (SPGGQDTPSSSSSGDDS) has biased composition (low complexity). Residues 790–801 (PPGPPSNGGPRT) show a composition bias toward pro residues.

It belongs to the protein kinase superfamily. Tyr protein kinase family. Fibroblast growth factor receptor subfamily. Monomer. Homodimer after ligand binding. Interacts with FGF1, FGF2, FGF4, FGF6; FGF8, FGF9, FGF10, FGF17, FGF18, FGF19, FGF20 and FGF23 (in vitro). Interacts with KLB. Affinity for fibroblast growth factors (FGFs) is increased by heparan sulfate glycosaminoglycans that function as coreceptors. Likewise, KLB increases the affinity for FGF19 and FGF21. Interacts with PIK3R1, PLCG1, SOCS1 and SOCS3. Post-translationally, autophosphorylated. Binding of FGF family members together with heparan sulfate proteoglycan or heparin promotes receptor dimerization and autophosphorylation on tyrosine residues. Autophosphorylation occurs in trans between the two FGFR molecules present in the dimer. Phosphorylation at Tyr-719 is essential for stimulation of cell proliferation and activation of PIK3R1, STAT1 and MAP kinase signaling. Phosphorylation at Tyr-755 is required for interaction with PIK3R1 and PLCG1. In terms of processing, ubiquitinated. Is rapidly ubiquitinated after ligand binding and autophosphorylation, leading to receptor internalization and degradation. Subject to both proteasomal and lysosomal degradation. N-glycosylated in the endoplasmic reticulum. The N-glycan chains undergo further maturation to an Endo H-resistant form in the Golgi apparatus. In terms of tissue distribution, in embryo, expressed in heart, lung, kidney, skin, head and liver but not in muscle. In adult, highest levels in brain. Also expressed in liver, lung, kidney, testis, ovary and uterus. Very low levels in heart, thymus, spleen and muscle.

It localises to the cell membrane. The protein localises to the cytoplasmic vesicle. Its subcellular location is the endoplasmic reticulum. The catalysed reaction is L-tyrosyl-[protein] + ATP = O-phospho-L-tyrosyl-[protein] + ADP + H(+). Present in an inactive conformation in the absence of bound ligand. Ligand binding leads to dimerization and activation by autophosphorylation on tyrosine residues. In terms of biological role, tyrosine-protein kinase that acts as a cell-surface receptor for fibroblast growth factors and plays an essential role in the regulation of cell proliferation, differentiation and apoptosis. Plays an essential role in the regulation of chondrocyte differentiation, proliferation and apoptosis, and is required for normal skeleton development. Regulates both osteogenesis and postnatal bone mineralization by osteoblasts. Promotes apoptosis in chondrocytes, but can also promote cancer cell proliferation. Required for normal development of the inner ear. Phosphorylates PLCG1, CBL and FRS2. Ligand binding leads to the activation of several signaling cascades. Activation of PLCG1 leads to the production of the cellular signaling molecules diacylglycerol and inositol 1,4,5-trisphosphate. Phosphorylation of FRS2 triggers recruitment of GRB2, GAB1, PIK3R1 and SOS1, and mediates activation of RAS, MAPK1/ERK2, MAPK3/ERK1 and the MAP kinase signaling pathway, as well as of the AKT1 signaling pathway. Plays a role in the regulation of vitamin D metabolism. Mutations that lead to constitutive kinase activation or impair normal FGFR3 maturation, internalization and degradation lead to aberrant signaling. Over-expressed or constitutively activated FGFR3 promotes activation of STAT1, STAT5A and STAT5B. Plays a role in postnatal lung development. In Mus musculus (Mouse), this protein is Fibroblast growth factor receptor 3 (Fgfr3).